Reading from the N-terminus, the 256-residue chain is Biosynthetic peptidoglycan transglycosylase (256 aa).

A helical transmembrane segment spans residues 26–48 (VARWLAYVGGVFAGAWLATQLYY).

The protein belongs to the glycosyltransferase 51 family.

The protein resides in the cell inner membrane. It carries out the reaction [GlcNAc-(1-&gt;4)-Mur2Ac(oyl-L-Ala-gamma-D-Glu-L-Lys-D-Ala-D-Ala)](n)-di-trans,octa-cis-undecaprenyl diphosphate + beta-D-GlcNAc-(1-&gt;4)-Mur2Ac(oyl-L-Ala-gamma-D-Glu-L-Lys-D-Ala-D-Ala)-di-trans,octa-cis-undecaprenyl diphosphate = [GlcNAc-(1-&gt;4)-Mur2Ac(oyl-L-Ala-gamma-D-Glu-L-Lys-D-Ala-D-Ala)](n+1)-di-trans,octa-cis-undecaprenyl diphosphate + di-trans,octa-cis-undecaprenyl diphosphate + H(+). Its pathway is cell wall biogenesis; peptidoglycan biosynthesis. In terms of biological role, peptidoglycan polymerase that catalyzes glycan chain elongation from lipid-linked precursors. This is Biosynthetic peptidoglycan transglycosylase from Burkholderia pseudomallei (strain K96243).